The primary structure comprises 73 residues: Pelophylaxin-1 (73 aa).

A signal peptide spans 1-22 (MFTMKKSLLLVFFLGTIALSLC). The propeptide occupies 23–41 (EEERGADDDNGGEITDEEI). An intrachain disulfide couples Cys-67 to Cys-73.

In terms of tissue distribution, expressed by the skin glands.

Its subcellular location is the secreted. Functionally, antimicrobial peptide. The chain is Pelophylaxin-1 from Pelophylax fukienensis (Fukien gold-striped pond frog).